The sequence spans 445 residues: Enolase 2 (445 aa).

Positions 164 and 173 each coordinate substrate. Glu216 functions as the Proton donor in the catalytic mechanism. The Mg(2+) site is built by Asp251, Glu301, and Asp328. Glu301 and Asp328 together coordinate substrate. The active-site Proton acceptor is Lys353. Substrate is bound by residues 380 to 383 (SHRS) and Lys404.

This sequence belongs to the enolase family. As to quaternary structure, homodimer. It depends on Mg(2+) as a cofactor.

The protein resides in the cytoplasm. It carries out the reaction (2R)-2-phosphoglycerate = phosphoenolpyruvate + H2O. It participates in carbohydrate degradation; glycolysis; pyruvate from D-glyceraldehyde 3-phosphate: step 4/5. This Hevea brasiliensis (Para rubber tree) protein is Enolase 2 (ENO2).